We begin with the raw amino-acid sequence, 238 residues long: MRPNNRANNQVREIKITRNYTRYAEGSVLIEFGETKVLCNATVEESVPRFLKGQQQGWVTAEYGMLPRATHSRTQREAAKGKQGGRTMEIQRLIARSLRAVVDLKALGERTVTVDCDVIQADGGTRTASITGACVALYDAMNKLVANGTLKTNPMKGLVAAISVGIVAGEAVCDLEYLEDSNAETDMNVVMVQDGRLVEVQGTAEGEPFSHQELLTLLDLAKQGISQLVEAQRKALAE.

Phosphate is bound by residues Arg86 and 124–126; that span reads GTR.

The protein belongs to the RNase PH family. Homohexameric ring arranged as a trimer of dimers.

The catalysed reaction is tRNA(n+1) + phosphate = tRNA(n) + a ribonucleoside 5'-diphosphate. In terms of biological role, phosphorolytic 3'-5' exoribonuclease that plays an important role in tRNA 3'-end maturation. Removes nucleotide residues following the 3'-CCA terminus of tRNAs; can also add nucleotides to the ends of RNA molecules by using nucleoside diphosphates as substrates, but this may not be physiologically important. Probably plays a role in initiation of 16S rRNA degradation (leading to ribosome degradation) during starvation. The protein is Ribonuclease PH of Mannheimia haemolytica (Pasteurella haemolytica).